Reading from the N-terminus, the 447-residue chain is Phospholipase A(1) LCAT3 (447 aa).

The active-site Acyl-ester intermediate is serine 177. Residues aspartate 384 and histidine 409 each act as charge relay system in the active site.

It belongs to the AB hydrolase superfamily. Lipase family.

It is found in the microsome membrane. The catalysed reaction is a 1,2-diacyl-sn-glycero-3-phosphocholine + H2O = a 2-acyl-sn-glycero-3-phosphocholine + a fatty acid + H(+). Hydrolyzes the sn-1 acylester bond of phospholipids. Phosphatidylcholine, phosphatidylethanolamine and phosphatidic acid can be used as substrates. Weak activity with lysophosphatidylcholine and no activity with tripalmitoylglycerol and cholesteryl oleate. Seems to have a preference for unsaturated fatty acids at the sn-1 position. This Arabidopsis thaliana (Mouse-ear cress) protein is Phospholipase A(1) LCAT3 (LCAT3).